Consider the following 117-residue polypeptide: Putative membrane protein insertion efficiency factor (117 aa).

This sequence belongs to the UPF0161 family.

The protein resides in the cell inner membrane. Could be involved in insertion of integral membrane proteins into the membrane. This is Putative membrane protein insertion efficiency factor from Bartonella henselae (strain ATCC 49882 / DSM 28221 / CCUG 30454 / Houston 1) (Rochalimaea henselae).